We begin with the raw amino-acid sequence, 487 residues long: NADH-quinone oxidoreductase subunit N (487 aa).

13 helical membrane passes run 7 to 27, 37 to 57, 81 to 101, 112 to 132, 166 to 186, 207 to 227, 237 to 257, 276 to 296, 307 to 327, 329 to 349, 373 to 393, 407 to 427, and 452 to 472; these read LTLI…ILIT, LVSI…APAL, FAKI…PAFF, PVLV…GDLI, FVLG…VYGF, ALFG…AVPF, GAPT…AVAL, IVIF…IGQT, INNV…GLSA, LTYL…LLML, LAWC…LLGF, DMVL…FYYI, and VLLI…TGWL.

The protein belongs to the complex I subunit 2 family. NDH-1 is composed of 14 different subunits. Subunits NuoA, H, J, K, L, M, N constitute the membrane sector of the complex.

It is found in the cell inner membrane. The catalysed reaction is a quinone + NADH + 5 H(+)(in) = a quinol + NAD(+) + 4 H(+)(out). Its function is as follows. NDH-1 shuttles electrons from NADH, via FMN and iron-sulfur (Fe-S) centers, to quinones in the respiratory chain. The immediate electron acceptor for the enzyme in this species is believed to be ubiquinone. Couples the redox reaction to proton translocation (for every two electrons transferred, four hydrogen ions are translocated across the cytoplasmic membrane), and thus conserves the redox energy in a proton gradient. In Erythrobacter litoralis (strain HTCC2594), this protein is NADH-quinone oxidoreductase subunit N.